Consider the following 432-residue polypeptide: Tol-Pal system protein TolB (432 aa).

Positions 1–22 (MMFKKCLSVLFTCLIFISSARA) are cleaved as a signal peptide.

The protein belongs to the TolB family. In terms of assembly, the Tol-Pal system is composed of five core proteins: the inner membrane proteins TolA, TolQ and TolR, the periplasmic protein TolB and the outer membrane protein Pal. They form a network linking the inner and outer membranes and the peptidoglycan layer.

The protein resides in the periplasm. In terms of biological role, part of the Tol-Pal system, which plays a role in outer membrane invagination during cell division and is important for maintaining outer membrane integrity. The protein is Tol-Pal system protein TolB of Marinomonas sp. (strain MWYL1).